Consider the following 89-residue polypeptide: MPSELEKALSNLIDVYHNYSNIQGNHHALYKNDFKKMVTTECPQFVQNINIENLFRELDINSDNAINFEEFLAMVIKVGVASHKDSHKE.

EF-hand domains are found at residues 13–48 and 46–81; these read IDVYHNYSNIQGNHHALYKNDFKKMVTTECPQFVQN and VQNINIENLFRELDINSDNAINFEEFLAMVIKVGVA. Zn(2+) contacts are provided by His17 and His27. Asp33 contacts Ca(2+). At Cys42 the chain carries S-nitrosocysteine. Residues Asp59, Asn61, Asp63, and Glu70 each coordinate Ca(2+). His83 serves as a coordination point for Zn(2+).

Belongs to the S-100 family. As to quaternary structure, homodimer. Preferentially exists as a heterodimer or heterotetramer with S100A9 known as calprotectin (S100A8/A9). Calprotectin (S100A8/9) interacts with CEACAM3 and tubulin filaments in a calcium-dependent manner. Heterotetrameric calprotectin (S100A8/A9) interacts with ANXA6 and associates with tubulin filaments in activated monocytes. S100A8 and calprotectin (S100A8/9) interact with NCF2/P67PHOX, RAC1 and RAC2. Calprotectin (S100A8/9) interacts with CYBA and CYBB. S100A8 interacts with AGER, ATP2A2 and with the heterodimeric complex formed by TLR4 and LY96. Calprotectin (S100A8/9) interacts with NOS2 to form the iNOS-S100A8/A9 transnitrosylase complex. Calprotectin (S100A8/9) interacts with CD69.

Its subcellular location is the secreted. It is found in the cytoplasm. It localises to the cytoskeleton. The protein localises to the cell membrane. Calprotectin (S100A8/A9) activity on TLR4 signaling is inhibited by paquinimod. Its function is as follows. S100A8 is a calcium- and zinc-binding protein which plays a prominent role in the regulation of inflammatory processes and immune response. It can induce neutrophil chemotaxis and adhesion. Predominantly found as calprotectin (S100A8/A9) which has a wide plethora of intra- and extracellular functions. The intracellular functions include: facilitating leukocyte arachidonic acid trafficking and metabolism, modulation of the tubulin-dependent cytoskeleton during migration of phagocytes and activation of the neutrophilic NADPH-oxidase. Also participates in regulatory T-cell differentiation together with CD69. Activates NADPH-oxidase by facilitating the enzyme complex assembly at the cell membrane, transferring arachidonic acid, an essential cofactor, to the enzyme complex and S100A8 contributes to the enzyme assembly by directly binding to NCF2/P67PHOX. The extracellular functions involve pro-inflammatory, antimicrobial, oxidant-scavenging and apoptosis-inducing activities. Its pro-inflammatory activity includes recruitment of leukocytes, promotion of cytokine and chemokine production, and regulation of leukocyte adhesion and migration. Acts as an alarmin or a danger associated molecular pattern (DAMP) molecule and stimulates innate immune cells via binding to pattern recognition receptors such as Toll-like receptor 4 (TLR4) and receptor for advanced glycation endproducts (AGER). Binding to TLR4 and AGER activates the MAP-kinase and NF-kappa-B signaling pathways resulting in the amplification of the pro-inflammatory cascade. Has antimicrobial activity towards bacteria and fungi and exerts its antimicrobial activity probably via chelation of Zn(2+) which is essential for microbial growth. Can induce cell death via autophagy and apoptosis and this occurs through the cross-talk of mitochondria and lysosomes via reactive oxygen species (ROS) and the process involves BNIP3. Can regulate neutrophil number and apoptosis by an anti-apoptotic effect; regulates cell survival via ITGAM/ITGB and TLR4 and a signaling mechanism involving MEK-ERK. Its role as an oxidant scavenger has a protective role in preventing exaggerated tissue damage by scavenging oxidants. The iNOS-S100A8/A9 transnitrosylase complex is proposed to direct selective inflammatory stimulus-dependent S-nitrosylation of multiple targets such as GAPDH, ANXA5, EZR, MSN and VIM by recognizing a [IL]-x-C-x-x-[DE] motif; S100A8 seems to contribute to S-nitrosylation site selectivity. (Microbial infection) Upon infection by murine coronavirus (MHV-A59), induces expansion of aberrant immature neutrophils in a TLR4-dependent manner. The sequence is that of Protein S100-A8 from Mus musculus (Mouse).